A 210-amino-acid chain; its full sequence is Meiotic coiled-coil protein 7 (210 aa).

Positions 77-148 (KRSRESVLGS…LKTQLSNLNH (72 aa)) form a coiled coil.

Belongs to the MND1 family. Interacts with meu13.

The protein resides in the cytoplasm. It localises to the nucleus. Functionally, required for meiotic recombination. This chain is Meiotic coiled-coil protein 7 (mcp7), found in Schizosaccharomyces pombe (strain 972 / ATCC 24843) (Fission yeast).